Reading from the N-terminus, the 285-residue chain is Elongation factor Ts (285 aa).

The segment at 82 to 85 is involved in Mg(2+) ion dislocation from EF-Tu; it reads TDFV.

It belongs to the EF-Ts family.

It is found in the cytoplasm. Functionally, associates with the EF-Tu.GDP complex and induces the exchange of GDP to GTP. It remains bound to the aminoacyl-tRNA.EF-Tu.GTP complex up to the GTP hydrolysis stage on the ribosome. This is Elongation factor Ts from Yersinia pseudotuberculosis serotype O:1b (strain IP 31758).